The following is a 652-amino-acid chain: Tetracycline resistance protein TetP (652 aa).

Residues 2–252 (KKIINIGIVA…CSYFPFASND (251 aa)) form the tr-type G domain. Residues 11-18 (AHVDAGKT), 75-79 (DTPGH), and 129-132 (NKLD) each bind GTP.

This sequence belongs to the TRAFAC class translation factor GTPase superfamily. Classic translation factor GTPase family. TetM/TetO subfamily.

Functionally, abolishes the inhibitory effect of tetracyclin on protein synthesis by a non-covalent modification of the ribosomes. This chain is Tetracycline resistance protein TetP (tetP), found in Clostridium perfringens.